Reading from the N-terminus, the 465-residue chain is Clusterin-like protein 1 (465 aa).

The signal sequence occupies residues 1–20 (MKPPILVFIVYLLQLRDCQC). Residues 62-107 (LMERREEEHSKLMRTLKKCREEKQEALKLMNEVQEHLEEEERLCQV) adopt a coiled-coil conformation. 5 disulfides stabilise this stretch: Cys-105–Cys-333, Cys-116–Cys-325, Cys-119–Cys-322, Cys-124–Cys-315, and Cys-131–Cys-305. Asn-196 and Asn-257 each carry an N-linked (GlcNAc...) asparagine glycan. The segment at 280–300 (LSKQDKDSAHGGPSSTTWPVR) is disordered. N-linked (GlcNAc...) asparagine glycans are attached at residues Asn-311, Asn-351, Asn-412, and Asn-430.

This sequence belongs to the clusterin family.

Its subcellular location is the secreted. The protein is Clusterin-like protein 1 of Bos taurus (Bovine).